Here is a 172-residue protein sequence, read N- to C-terminus: Zinc finger C2HC domain-containing protein 1B (172 aa).

C2HC/C3H-type zinc fingers lie at residues 14–43 (KLFP…VFNK) and 117–146 (DYIQ…QTSR). Zn(2+) is bound by residues Cys18, Cys21, His33, Cys37, Cys121, Cys124, His136, and Cys140.

The protein belongs to the ZC2HC1 family. Zn(2+) is required as a cofactor.

This chain is Zinc finger C2HC domain-containing protein 1B (Zc2hc1b), found in Mus musculus (Mouse).